The chain runs to 81 residues: MDTSLKNNDGALEADNKNYQDYKDEPDKTSDVLDVTKHNSMVDCCHKNYSTFTSEWYINERKYNDVPEGPKKADVHRCTII.

The interval 1 to 28 is disordered; the sequence is MDTSLKNNDGALEADNKNYQDYKDEPDK. The segment covering 14–28 has biased composition (basic and acidic residues); sequence ADNKNYQDYKDEPDK.

The protein belongs to the asfivirus L83L family. In terms of assembly, interacts with host IL1B.

It localises to the host cytoplasm. May subvert the host innate immune response by interacting with host IL1B and interfering with its function. The chain is Protein L83L from Ornithodoros (relapsing fever ticks).